The sequence spans 518 residues: Probable bifunctional methylthioribulose-1-phosphate dehydratase/enolase-phosphatase E1 (518 aa).

Residues 1-247 (MAAAPPAVAV…AIKLHQIGLD (247 aa)) form a methylthioribulose-1-phosphate dehydratase region. Residue cysteine 119 coordinates substrate. Zn(2+) contacts are provided by histidine 137 and histidine 139. The active-site Proton donor/acceptor; for methylthioribulose-1-phosphate dehydratase activity is glutamate 162. Histidine 212 serves as a coordination point for Zn(2+). An enolase-phosphatase E1 region spans residues 279–518 (IVLDIEGTTT…FKTITSFAEI (240 aa)). Residues aspartate 282 and glutamate 284 each coordinate Mg(2+). Substrate-binding positions include 417–418 (SS) and lysine 451. Mg(2+) is bound at residue aspartate 477.

The protein in the N-terminal section; belongs to the aldolase class II family. MtnB subfamily. It in the C-terminal section; belongs to the HAD-like hydrolase superfamily. MasA/MtnC family. Requires Zn(2+) as cofactor. It depends on Mg(2+) as a cofactor.

The enzyme catalyses 5-(methylsulfanyl)-D-ribulose 1-phosphate = 5-methylsulfanyl-2,3-dioxopentyl phosphate + H2O. The catalysed reaction is 5-methylsulfanyl-2,3-dioxopentyl phosphate + H2O = 1,2-dihydroxy-5-(methylsulfanyl)pent-1-en-3-one + phosphate. The protein operates within amino-acid biosynthesis; L-methionine biosynthesis via salvage pathway; L-methionine from S-methyl-5-thio-alpha-D-ribose 1-phosphate: step 2/6. Its pathway is amino-acid biosynthesis; L-methionine biosynthesis via salvage pathway; L-methionine from S-methyl-5-thio-alpha-D-ribose 1-phosphate: step 3/6. It functions in the pathway amino-acid biosynthesis; L-methionine biosynthesis via salvage pathway; L-methionine from S-methyl-5-thio-alpha-D-ribose 1-phosphate: step 4/6. The polypeptide is Probable bifunctional methylthioribulose-1-phosphate dehydratase/enolase-phosphatase E1 (Populus trichocarpa (Western balsam poplar)).